Reading from the N-terminus, the 275-residue chain is tRNA uridine(34) hydroxylase (275 aa).

A Rhodanese domain is found at 121-214 (SQPDVLVIDT…YLEKTYNKNG (94 aa)). The active-site Cysteine persulfide intermediate is the cysteine 174.

Belongs to the TrhO family.

It catalyses the reaction uridine(34) in tRNA + AH2 + O2 = 5-hydroxyuridine(34) in tRNA + A + H2O. In terms of biological role, catalyzes oxygen-dependent 5-hydroxyuridine (ho5U) modification at position 34 in tRNAs. The protein is tRNA uridine(34) hydroxylase of Wolbachia pipientis wMel.